Consider the following 419-residue polypeptide: Aminoacyltransferase FemB (419 aa).

The protein belongs to the FemABX family. Homodimer. Interacts with FemA.

The protein localises to the cytoplasm. The enzyme catalyses MurNAc-L-Ala-D-isoglutaminyl-L-Lys-(N(6)-tri-Gly)-D-Ala-D-Ala-diphospho-di-trans,octa-cis-undecaprenyl-GlcNAc + 2 glycyl-tRNA(Gly) = MurNAc-L-Ala-D-isoglutaminyl-L-Lys-(N(6)-penta-Gly)-D-Ala-D-Ala-diphospho-di-trans,octa-cis-undecaprenyl-GlcNAc + 2 tRNA(Gly) + 2 H(+). Catalyzes the formation of the pentaglycine interpeptide bridge, which is characteristic of the S.aureus peptidoglycan. Adds glycines 4 and 5 of the pentaglycine bridge, using glycyl-tRNA(Gly) as donor. Involved in resistance to methicillin. This is Aminoacyltransferase FemB (femB) from Staphylococcus aureus (strain NCTC 8325 / PS 47).